Reading from the N-terminus, the 376-residue chain is Beta-centractin (376 aa).

Methionine 1 carries the post-translational modification N-acetylmethionine. Tyrosine 4 bears the 3'-nitrotyrosine mark.

This sequence belongs to the actin family. ARP1 subfamily.

The protein resides in the cytoplasm. Its subcellular location is the cytoskeleton. It is found in the microtubule organizing center. The protein localises to the centrosome. In terms of biological role, component of a multi-subunit complex involved in microtubule based vesicle motility. It is associated with the centrosome. This Bos taurus (Bovine) protein is Beta-centractin (ACTR1B).